A 521-amino-acid polypeptide reads, in one-letter code: Apolipoprotein N-acyltransferase (521 aa).

The next 5 membrane-spanning stretches (helical) occupy residues isoleucine 24–leucine 44, tryptophan 71–isoleucine 91, isoleucine 128–leucine 148, isoleucine 151–isoleucine 171, and asparagine 182–isoleucine 202. The 255-residue stretch at leucine 218–leucine 472 folds into the CN hydrolase domain. The Proton acceptor role is filled by glutamate 263. Lysine 331 is a catalytic residue. Cysteine 383 (nucleophile) is an active-site residue.

The protein belongs to the CN hydrolase family. Apolipoprotein N-acyltransferase subfamily.

The protein localises to the cell inner membrane. It catalyses the reaction N-terminal S-1,2-diacyl-sn-glyceryl-L-cysteinyl-[lipoprotein] + a glycerophospholipid = N-acyl-S-1,2-diacyl-sn-glyceryl-L-cysteinyl-[lipoprotein] + a 2-acyl-sn-glycero-3-phospholipid + H(+). Its pathway is protein modification; lipoprotein biosynthesis (N-acyl transfer). In terms of biological role, catalyzes the phospholipid dependent N-acylation of the N-terminal cysteine of apolipoprotein, the last step in lipoprotein maturation. In Borreliella burgdorferi (strain ATCC 35210 / DSM 4680 / CIP 102532 / B31) (Borrelia burgdorferi), this protein is Apolipoprotein N-acyltransferase.